Consider the following 253-residue polypeptide: Imidazole glycerol phosphate synthase subunit HisF (253 aa).

Active-site residues include Asp-13 and Asp-132.

The protein belongs to the HisA/HisF family. Heterodimer of HisH and HisF.

It localises to the cytoplasm. The enzyme catalyses 5-[(5-phospho-1-deoxy-D-ribulos-1-ylimino)methylamino]-1-(5-phospho-beta-D-ribosyl)imidazole-4-carboxamide + L-glutamine = D-erythro-1-(imidazol-4-yl)glycerol 3-phosphate + 5-amino-1-(5-phospho-beta-D-ribosyl)imidazole-4-carboxamide + L-glutamate + H(+). It participates in amino-acid biosynthesis; L-histidine biosynthesis; L-histidine from 5-phospho-alpha-D-ribose 1-diphosphate: step 5/9. Functionally, IGPS catalyzes the conversion of PRFAR and glutamine to IGP, AICAR and glutamate. The HisF subunit catalyzes the cyclization activity that produces IGP and AICAR from PRFAR using the ammonia provided by the HisH subunit. This chain is Imidazole glycerol phosphate synthase subunit HisF, found in Aliarcobacter butzleri (strain RM4018) (Arcobacter butzleri).